The sequence spans 111 residues: uncharacterized protein (111 aa).

This is an uncharacterized protein from Bacillus subtilis (strain 168).